Consider the following 279-residue polypeptide: 4-diphosphocytidyl-2-C-methyl-D-erythritol kinase (279 aa).

The active site involves K11. ATP is bound at residue 95–105; the sequence is PVAAGLGGGSS. The active site involves D137.

Belongs to the GHMP kinase family. IspE subfamily.

The enzyme catalyses 4-CDP-2-C-methyl-D-erythritol + ATP = 4-CDP-2-C-methyl-D-erythritol 2-phosphate + ADP + H(+). It participates in isoprenoid biosynthesis; isopentenyl diphosphate biosynthesis via DXP pathway; isopentenyl diphosphate from 1-deoxy-D-xylulose 5-phosphate: step 3/6. Catalyzes the phosphorylation of the position 2 hydroxy group of 4-diphosphocytidyl-2C-methyl-D-erythritol. In Geobacter sulfurreducens (strain ATCC 51573 / DSM 12127 / PCA), this protein is 4-diphosphocytidyl-2-C-methyl-D-erythritol kinase.